The chain runs to 404 residues: Probable tRNA sulfurtransferase (404 aa).

A THUMP domain is found at 61–166 (EAVSERLKDV…SGYSYIMCDE (106 aa)). Residues 184 to 185 (LL), 209 to 210 (HF), Arg266, Gly288, and Gln297 each bind ATP.

The protein belongs to the ThiI family.

The protein localises to the cytoplasm. It carries out the reaction [ThiI sulfur-carrier protein]-S-sulfanyl-L-cysteine + a uridine in tRNA + 2 reduced [2Fe-2S]-[ferredoxin] + ATP + H(+) = [ThiI sulfur-carrier protein]-L-cysteine + a 4-thiouridine in tRNA + 2 oxidized [2Fe-2S]-[ferredoxin] + AMP + diphosphate. The catalysed reaction is [ThiS sulfur-carrier protein]-C-terminal Gly-Gly-AMP + S-sulfanyl-L-cysteinyl-[cysteine desulfurase] + AH2 = [ThiS sulfur-carrier protein]-C-terminal-Gly-aminoethanethioate + L-cysteinyl-[cysteine desulfurase] + A + AMP + 2 H(+). It participates in cofactor biosynthesis; thiamine diphosphate biosynthesis. Functionally, catalyzes the ATP-dependent transfer of a sulfur to tRNA to produce 4-thiouridine in position 8 of tRNAs, which functions as a near-UV photosensor. Also catalyzes the transfer of sulfur to the sulfur carrier protein ThiS, forming ThiS-thiocarboxylate. This is a step in the synthesis of thiazole, in the thiamine biosynthesis pathway. The sulfur is donated as persulfide by IscS. The protein is Probable tRNA sulfurtransferase of Bacillus cereus (strain ATCC 14579 / DSM 31 / CCUG 7414 / JCM 2152 / NBRC 15305 / NCIMB 9373 / NCTC 2599 / NRRL B-3711).